We begin with the raw amino-acid sequence, 402 residues long: Apolipoprotein L3 (402 aa).

It belongs to the apolipoprotein L family. As to expression, widely expressed; the highest levels are in prostate, lung and placenta; also detected in kidney, bone marrow, spleen, thymus, spinal cord, adrenal gland, salivary gland, trachea and mammary gland; levels are low in brain, heart, fetal liver, pancreas and testis.

Its subcellular location is the cytoplasm. Functionally, may affect the movement of lipids in the cytoplasm or allow the binding of lipids to organelles. The protein is Apolipoprotein L3 (APOL3) of Homo sapiens (Human).